A 207-amino-acid polypeptide reads, in one-letter code: Guanylate kinase (207 aa).

Residues 5–184 form the Guanylate kinase-like domain; sequence GNLFIVSAPS…ALADLRAIIR (180 aa). 12-19 serves as a coordination point for ATP; it reads APSGAGKS.

The protein belongs to the guanylate kinase family.

Its subcellular location is the cytoplasm. The catalysed reaction is GMP + ATP = GDP + ADP. In terms of biological role, essential for recycling GMP and indirectly, cGMP. This Shewanella oneidensis (strain ATCC 700550 / JCM 31522 / CIP 106686 / LMG 19005 / NCIMB 14063 / MR-1) protein is Guanylate kinase.